The primary structure comprises 392 residues: LL-diaminopimelate aminotransferase (392 aa).

Substrate is bound by residues Y13 and G38. Pyridoxal 5'-phosphate is bound by residues Y67, 102–103, Y127, N177, Y208, and 236–238; these read SK and SCS. Residues K103, Y127, and N177 each contribute to the substrate site. Residue K239 is modified to N6-(pyridoxal phosphate)lysine. R247 is a binding site for pyridoxal 5'-phosphate. R366 lines the substrate pocket.

It belongs to the class-I pyridoxal-phosphate-dependent aminotransferase family. LL-diaminopimelate aminotransferase subfamily. In terms of assembly, homodimer. Pyridoxal 5'-phosphate is required as a cofactor.

It catalyses the reaction (2S,6S)-2,6-diaminopimelate + 2-oxoglutarate = (S)-2,3,4,5-tetrahydrodipicolinate + L-glutamate + H2O + H(+). It participates in amino-acid biosynthesis; L-lysine biosynthesis via DAP pathway; LL-2,6-diaminopimelate from (S)-tetrahydrodipicolinate (aminotransferase route): step 1/1. Its function is as follows. Involved in the synthesis of meso-diaminopimelate (m-DAP or DL-DAP), required for both lysine and peptidoglycan biosynthesis. Catalyzes the direct conversion of tetrahydrodipicolinate to LL-diaminopimelate. Can also use m-DAP instead of LL-DAP as the amino-group donor. The protein is LL-diaminopimelate aminotransferase of Gloeobacter violaceus (strain ATCC 29082 / PCC 7421).